We begin with the raw amino-acid sequence, 133 residues long: ATP synthase epsilon chain, chloroplastic (133 aa).

Belongs to the ATPase epsilon chain family. As to quaternary structure, F-type ATPases have 2 components, CF(1) - the catalytic core - and CF(0) - the membrane proton channel. CF(1) has five subunits: alpha(3), beta(3), gamma(1), delta(1), epsilon(1). CF(0) has three main subunits: a, b and c.

Its subcellular location is the plastid. The protein localises to the chloroplast thylakoid membrane. Produces ATP from ADP in the presence of a proton gradient across the membrane. This is ATP synthase epsilon chain, chloroplastic from Ipomoea batatas (Sweet potato).